We begin with the raw amino-acid sequence, 127 residues long: Holo-[acyl-carrier-protein] synthase (127 aa).

Positions 8 and 60 each coordinate Mg(2+).

This sequence belongs to the P-Pant transferase superfamily. AcpS family. The cofactor is Mg(2+).

Its subcellular location is the cytoplasm. The enzyme catalyses apo-[ACP] + CoA = holo-[ACP] + adenosine 3',5'-bisphosphate + H(+). Transfers the 4'-phosphopantetheine moiety from coenzyme A to a Ser of acyl-carrier-protein. The sequence is that of Holo-[acyl-carrier-protein] synthase from Marinomonas sp. (strain MWYL1).